Here is a 234-residue protein sequence, read N- to C-terminus: Peptidase E (234 aa).

Residues Ser-123, Asp-138, and His-160 each act as charge relay system in the active site.

It belongs to the peptidase S51 family.

Its subcellular location is the cytoplasm. The catalysed reaction is Dipeptidase E catalyzes the hydrolysis of dipeptides Asp-|-Xaa. It does not act on peptides with N-terminal Glu, Asn or Gln, nor does it cleave isoaspartyl peptides.. In terms of biological role, hydrolyzes dipeptides containing N-terminal aspartate residues. May play a role in allowing the cell to use peptide aspartate to spare carbon otherwise required for the synthesis of the aspartate family of amino acids. The protein is Peptidase E of Actinobacillus pleuropneumoniae serotype 3 (strain JL03).